Reading from the N-terminus, the 344-residue chain is tRNA N6-adenosine threonylcarbamoyltransferase (344 aa).

Fe cation is bound by residues His119 and His123. Substrate contacts are provided by residues 141–145, Asp174, Gly187, Asp191, and Asn280; that span reads VVSGG. Residue Asp310 participates in Fe cation binding.

It belongs to the KAE1 / TsaD family. The cofactor is Fe(2+).

The protein resides in the cytoplasm. It carries out the reaction L-threonylcarbamoyladenylate + adenosine(37) in tRNA = N(6)-L-threonylcarbamoyladenosine(37) in tRNA + AMP + H(+). In terms of biological role, required for the formation of a threonylcarbamoyl group on adenosine at position 37 (t(6)A37) in tRNAs that read codons beginning with adenine. Is involved in the transfer of the threonylcarbamoyl moiety of threonylcarbamoyl-AMP (TC-AMP) to the N6 group of A37, together with TsaE and TsaB. TsaD likely plays a direct catalytic role in this reaction. The sequence is that of tRNA N6-adenosine threonylcarbamoyltransferase from Listeria monocytogenes serotype 4b (strain CLIP80459).